Consider the following 150-residue polypeptide: Protein A151R (150 aa).

The protein belongs to the asfivirus A151R family. In terms of assembly, monomer. Homodimer. Interacts with protein B119L. Interacts with membrane protein E248R. Requires Zn(2+) as cofactor.

May participate in a redox cascade for the formation of disulfide bonds in viral proteins. This chain is Protein A151R, found in African swine fever virus (isolate Pig/Kenya/KEN-50/1950) (ASFV).